Consider the following 854-residue polypeptide: Espin (854 aa).

ANK repeat units follow at residues 1-31 (MALE…GPSL), 35-64 (LDAL…LPAA), 69-99 (NGAT…RVQD), 103-133 (SGAT…DPTA), 137-167 (MGAL…GVNA), 171-201 (NGAT…DPHA), 205-235 (DGMT…SLSE), 239-268 (DGAT…EISA), and 271-300 (WGGT…ELDV). 2 positions are modified to phosphoserine: serine 338 and serine 342. The segment covering 338–349 (SRDPSAELEAKQ) has biased composition (basic and acidic residues). Disordered regions lie at residues 338–400 (SRDP…CGLS), 415–474 (NPEL…MQTK), 487–713 (KELS…AGFQ), 765–788 (KMQE…SMPA), and 800–832 (EERE…TLGY). The span at 352-377 (SGMSSPNTTVSVQPLNFDLSSPTSTL) shows a compositional bias: polar residues. Over residues 378 to 389 (SNYDSCSSSHSS) the composition is skewed to low complexity. The segment covering 428-463 (PTPPPPPPSFPPPPPPPGTQLPPPPPGYPAPKPPVG) has biased composition (pro residues). A compositionally biased stretch (basic and acidic residues) spans 487-505 (KELSSCDGHDGLRRQDSSR). Residue serine 515 is modified to Phosphoserine. Positions 595–620 (LPPPPPPPPPPLPEAASSPPPAPPLP) are enriched in pro residues. A compositionally biased stretch (low complexity) spans 633 to 642 (SSSSTGSTKS). Composition is skewed to polar residues over residues 643–652 (FNMMSPTGDN) and 667–678 (PTPQSKGLTTVF). Serine 647 carries the phosphoserine modification. The WH2 domain occupies 651–668 (DNSELLAEIKAGKSLKPT). Residues serine 690 and serine 696 each carry the phosphoserine modification. Residues 692–703 (LPSVSPALSPVR) are compositionally biased toward low complexity. Positions 756-830 (QVMVRKMQLK…KEQSEKLRTL (75 aa)) form a coiled coil.

As to quaternary structure, monomer. Binds F-actin in a Ca(2+)-resistant fashion. Interacts (via N-terminus) with BAIAP2 (via SH3-domain). Interacts with PFN2. Interacts with MYO3A (via C-terminus). Interacts with MYO3B (via C-terminus).

It localises to the cytoplasm. Its subcellular location is the cytoskeleton. The protein resides in the cell projection. The protein localises to the stereocilium. It is found in the microvillus. Functionally, multifunctional actin-bundling protein. Plays a major role in regulating the organization, dimension, dynamics and signaling capacities of the actin filament-rich microvilli in the mechanosensory and chemosensory cells. Required for the assembly and stabilization of the stereociliary parallel actin bundles. Plays a crucial role in the formation and maintenance of inner ear hair cell stereocilia. Involved in the elongation of actin in stereocilia. In extrastriolar hair cells, required for targeting MYO3B to stereocilia tips, and for regulation of stereocilia diameter and staircase formation. The chain is Espin (ESPN) from Homo sapiens (Human).